Reading from the N-terminus, the 257-residue chain is Putative cysteine-rich repeat secretory protein 28 (257 aa).

The first 26 residues, 1–26 (MFSTFGSVPILTVVAIQLFLIRNVLS), serve as a signal peptide directing secretion. Gnk2-homologous domains follow at residues 32–136 (AYLH…TVDS) and 142–254 (YEND…LYPF).

It belongs to the cysteine-rich repeat secretory protein family.

It localises to the secreted. In Arabidopsis thaliana (Mouse-ear cress), this protein is Putative cysteine-rich repeat secretory protein 28 (CRRSP28).